Reading from the N-terminus, the 305-residue chain is Oxygen-dependent coproporphyrinogen-III oxidase (305 aa).

Ser-92 is a binding site for substrate. His-96 and His-106 together coordinate a divalent metal cation. The active-site Proton donor is His-106. Substrate is bound at residue 108–110 (NVR). His-145 and His-175 together coordinate a divalent metal cation. The important for dimerization stretch occupies residues 239–274 (YVEFNLLFDRGTLFGLQSGGRAESILISLPPLVRWE). 257 to 259 (GGR) contributes to the substrate binding site.

It belongs to the aerobic coproporphyrinogen-III oxidase family. Homodimer. Requires a divalent metal cation as cofactor.

Its subcellular location is the cytoplasm. It catalyses the reaction coproporphyrinogen III + O2 + 2 H(+) = protoporphyrinogen IX + 2 CO2 + 2 H2O. The protein operates within porphyrin-containing compound metabolism; protoporphyrin-IX biosynthesis; protoporphyrinogen-IX from coproporphyrinogen-III (O2 route): step 1/1. In terms of biological role, involved in the heme biosynthesis. Catalyzes the aerobic oxidative decarboxylation of propionate groups of rings A and B of coproporphyrinogen-III to yield the vinyl groups in protoporphyrinogen-IX. This chain is Oxygen-dependent coproporphyrinogen-III oxidase, found in Xylella fastidiosa (strain 9a5c).